Consider the following 83-residue polypeptide: Mu-theraphotoxin-Hhn2o (83 aa).

Residues 1 to 21 (MKASMFLALAGLVLLFVVGYA) form the signal peptide. Residues 22-48 (SESEEKEFPIELLSKIFAVDVFKGEER) constitute a propeptide that is removed on maturation. 3 cysteine pairs are disulfide-bonded: cysteine 50–cysteine 65, cysteine 57–cysteine 70, and cysteine 64–cysteine 77. A Leucine amide modification is found at leucine 81.

It belongs to the neurotoxin 10 (Hwtx-1) family. 15 (Hntx-3) subfamily. As to quaternary structure, monomer. As to expression, expressed by the venom gland.

The protein localises to the secreted. Lethal neurotoxin. Selectively blocks tetrodotoxin-sensitive voltage-gated sodium channels (Nav). Does not affect tetrodotoxin-resistant voltage-gated sodium channels or calcium channels. This is Mu-theraphotoxin-Hhn2o from Cyriopagopus hainanus (Chinese bird spider).